Reading from the N-terminus, the 222-residue chain is TPR repeat-containing protein BH2049 (222 aa).

TPR repeat units lie at residues 34-67 (AEPLFHLGNIHYAYGHKASAMNYWKEAVSKNREH) and 169-202 (PVGLKILGISSIRTNQYEAGLTFLEKSLELKEDK).

This Halalkalibacterium halodurans (strain ATCC BAA-125 / DSM 18197 / FERM 7344 / JCM 9153 / C-125) (Bacillus halodurans) protein is TPR repeat-containing protein BH2049.